The primary structure comprises 511 residues: Histidine ammonia-lyase (511 aa).

The 5-imidazolinone (Ala-Gly) cross-link spans alanine 142 to glycine 144. The residue at position 143 (serine 143) is a 2,3-didehydroalanine (Ser).

The protein belongs to the PAL/histidase family. In terms of processing, contains an active site 4-methylidene-imidazol-5-one (MIO), which is formed autocatalytically by cyclization and dehydration of residues Ala-Ser-Gly.

It localises to the cytoplasm. It carries out the reaction L-histidine = trans-urocanate + NH4(+). It participates in amino-acid degradation; L-histidine degradation into L-glutamate; N-formimidoyl-L-glutamate from L-histidine: step 1/3. The polypeptide is Histidine ammonia-lyase (hutH) (Rhizobium meliloti (strain 1021) (Ensifer meliloti)).